We begin with the raw amino-acid sequence, 266 residues long: uncharacterized protein (266 aa).

It belongs to the chlamydial CPn_0087/CT3_09/TC_0583 family.

This is an uncharacterized protein from Chlamydia muridarum (strain MoPn / Nigg).